Here is a 444-residue protein sequence, read N- to C-terminus: Glutamate--tRNA ligase 1 (444 aa).

The 'HIGH' region signature appears at 10-20 (PSPTGRLHLGN). Residues 241-245 (GLSKR) carry the 'KMSKS' region motif. An ATP-binding site is contributed by Lys-244.

This sequence belongs to the class-I aminoacyl-tRNA synthetase family. Glutamate--tRNA ligase type 1 subfamily. As to quaternary structure, monomer.

Its subcellular location is the cytoplasm. It catalyses the reaction tRNA(Glu) + L-glutamate + ATP = L-glutamyl-tRNA(Glu) + AMP + diphosphate. In terms of biological role, catalyzes the attachment of glutamate to tRNA(Glu) in a two-step reaction: glutamate is first activated by ATP to form Glu-AMP and then transferred to the acceptor end of tRNA(Glu). In Rhodospirillum rubrum (strain ATCC 11170 / ATH 1.1.1 / DSM 467 / LMG 4362 / NCIMB 8255 / S1), this protein is Glutamate--tRNA ligase 1.